The chain runs to 349 residues: 5,10-methylenetetrahydromethanopterin reductase (349 aa).

It belongs to the mer family. As to quaternary structure, homotetramer composed of two loosely associated dimers.

The protein resides in the cytoplasm. The catalysed reaction is 5-methyl-5,6,7,8-tetrahydromethanopterin + oxidized coenzyme F420-(gamma-L-Glu)(n) + H(+) = 5,10-methylenetetrahydromethanopterin + reduced coenzyme F420-(gamma-L-Glu)(n). Its pathway is one-carbon metabolism; methanogenesis from CO(2); methyl-coenzyme M from 5,10-methylene-5,6,7,8-tetrahydromethanopterin: step 1/2. With respect to regulation, requires the presence of relatively high concentrations of either sulfate or phosphate for maximal activity. Its function is as follows. Catalyzes the reversible reduction of methylene-H(4)MPT to methyl-H(4)MPT. This Methanopyrus kandleri (strain AV19 / DSM 6324 / JCM 9639 / NBRC 100938) protein is 5,10-methylenetetrahydromethanopterin reductase.